We begin with the raw amino-acid sequence, 1105 residues long: ATP-dependent DNA helicase MPH1 (1105 aa).

Residues 94–261 (IVQRAFYDNL…EIIDNLSISK (168 aa)) form the Helicase ATP-binding domain. 107–114 (LPTGLGKT) is an ATP binding site. Positions 209–212 (DEAH) match the DEAH box motif. Residues 468–641 (SIERIGSNLR…LITLAQSNRI (174 aa)) enclose the Helicase C-terminal domain. Disordered stretches follow at residues 493 to 534 (EEAY…AQIK), 684 to 708 (KGKK…EKRF), 758 to 824 (IQSK…PKLG), 850 to 880 (LVTG…ECAP), and 918 to 953 (VSDD…FDEG). The span at 499–511 (KGKKGRTKGKATK) shows a compositional bias: basic residues. The segment covering 518-532 (TPERSTSRTSSEDAQ) has biased composition (basic and acidic residues). Residues 684–705 (KGKKVTKSKSKSKSNSKSKKIE) are compositionally biased toward basic residues. A compositionally biased stretch (basic and acidic residues) spans 764–787 (PVKENQSKRPNSEHICEEDSRQET). Residues 788–799 (ENNSNESNGSFE) are compositionally biased toward low complexity. Positions 927 to 943 (DSINNQQLHKNKNLGST) are enriched in polar residues. Residues 944 to 953 (SDDDDAFDEG) are compositionally biased toward acidic residues.

This sequence belongs to the DEAD box helicase family. DEAH subfamily. FANCM sub-subfamily. As to quaternary structure, interacts with the MHF histone-fold complex to form the FANCM-MHF complex.

The protein resides in the nucleus. It catalyses the reaction ATP + H2O = ADP + phosphate + H(+). Functionally, ATP-dependent DNA helicase involved in DNA damage repair by homologous recombination and in genome maintenance. Capable of unwinding D-loops. Plays a role in limiting crossover recombinants during mitotic DNA double-strand break (DSB) repair. Component of a FANCM-MHF complex which promotes gene conversion at blocked replication forks, probably by reversal of the stalled fork. The sequence is that of ATP-dependent DNA helicase MPH1 from Debaryomyces hansenii (strain ATCC 36239 / CBS 767 / BCRC 21394 / JCM 1990 / NBRC 0083 / IGC 2968) (Yeast).